We begin with the raw amino-acid sequence, 414 residues long: Glucose-1-phosphate adenylyltransferase (414 aa).

Alpha-D-glucose 1-phosphate is bound by residues tyrosine 99, glycine 164, 181-182 (EK), and serine 199.

Belongs to the bacterial/plant glucose-1-phosphate adenylyltransferase family. In terms of assembly, homotetramer.

The catalysed reaction is alpha-D-glucose 1-phosphate + ATP + H(+) = ADP-alpha-D-glucose + diphosphate. The protein operates within glycan biosynthesis; glycogen biosynthesis. Functionally, involved in the biosynthesis of ADP-glucose, a building block required for the elongation reactions to produce glycogen. Catalyzes the reaction between ATP and alpha-D-glucose 1-phosphate (G1P) to produce pyrophosphate and ADP-Glc. The sequence is that of Glucose-1-phosphate adenylyltransferase from Bifidobacterium longum (strain DJO10A).